Reading from the N-terminus, the 97-residue chain is Small ribosomal subunit protein uS19 (97 aa).

Belongs to the universal ribosomal protein uS19 family.

Its function is as follows. Protein S19 forms a complex with S13 that binds strongly to the 16S ribosomal RNA. In Salinibacter ruber (strain DSM 13855 / M31), this protein is Small ribosomal subunit protein uS19.